The primary structure comprises 160 residues: Putative pre-16S rRNA nuclease (160 aa).

It belongs to the YqgF nuclease family.

It is found in the cytoplasm. Its function is as follows. Could be a nuclease involved in processing of the 5'-end of pre-16S rRNA. In Cutibacterium acnes (strain DSM 16379 / KPA171202) (Propionibacterium acnes), this protein is Putative pre-16S rRNA nuclease.